The chain runs to 361 residues: Cyclin-dependent kinase 10 (361 aa).

The Protein kinase domain maps to 37 to 321; the sequence is FEKLNRIGEG…AGDCLESSYF (285 aa). Residues 43 to 51 and lysine 66 contribute to the ATP site; that span reads IGEGTYGIV. Aspartate 161 (proton acceptor) is an active-site residue. At threonine 194 the chain carries Phosphothreonine. Residues 332-361 are disordered; that stretch reads LMPTFPHHRNKRATPATSLGTESQSRRGRP.

The protein belongs to the protein kinase superfamily. CMGC Ser/Thr protein kinase family. CDC2/CDKX subfamily. In terms of assembly, heterodimer with CCNQ, the interaction is required for kinase activity. Interacts with ETS2. Interacts with PRK2.

It localises to the cytoplasm. Its subcellular location is the cytoskeleton. The protein localises to the cilium basal body. The enzyme catalyses L-seryl-[protein] + ATP = O-phospho-L-seryl-[protein] + ADP + H(+). The catalysed reaction is L-threonyl-[protein] + ATP = O-phospho-L-threonyl-[protein] + ADP + H(+). Cyclin-dependent kinase that phosphorylates the transcription factor ETS2 (in vitro) and positively controls its proteasomal degradation (in cells). Involved in the regulation of actin cytoskeleton organization through the phosphorylation of actin dynamics regulators such as PKN2. Is a negative regulator of ciliogenesis through phosphorylation of PKN2 and promotion of RhoA signaling. This Bos taurus (Bovine) protein is Cyclin-dependent kinase 10 (CDK10).